Consider the following 422-residue polypeptide: Transcription initiation factor TFIID subunit 15b (422 aa).

Disordered stretches follow at residues 1–24 (MAGMYNQDGGGGAPIPSYGGDGYG), 47–94 (YGGR…PNPS), 111–263 (ALAP…DAAT), and 368–422 (MAEK…SRPY). 2 stretches are compositionally biased toward gly residues: residues 8–24 (DGGGGAPIPSYGGDGYG) and 47–83 (YGGRGGYGGGGGRGNRGGGGGGYQGGDRGGRGSGGGG). The RanBP2-type zinc finger occupies 84-115 (RDGDWRCPNPSCGNVNFARRVECNKCGALAPS). The span at 123–133 (DRGGGGYSRGG) shows a compositional bias: gly residues. A compositionally biased stretch (basic and acidic residues) spans 134 to 156 (GDSDRGGGRGGRNDSGRSYESSR). Composition is skewed to gly residues over residues 219–229 (PSYGGPRGGYG) and 236–247 (GGRGGRSGGYDG). Basic and acidic residues predominate over residues 252–263 (RRQEASYEDAAT). One can recognise an RRM domain in the interval 280–371 (ARIYISNLPP…NKISVTMAEK (92 aa)). The span at 382–397 (RGGGRGGGGGGYGGGG) shows a compositional bias: gly residues.

The protein belongs to the TAF15 family. In terms of assembly, component of the TFIID complex. TFIID is composed of TATA binding protein (TBP) and a number of TBP-associated factors (TAFs) whose MWs range from 14-217 kDa. Interacts with TAF4, TAF4B, TAF5, TAF12B and TAF14. Expressed in roots, leaves and inflorescences.

The protein resides in the nucleus. In terms of biological role, TAFs are components of the transcription factor IID (TFIID) complex that is essential for mediating regulation of RNA polymerase transcription. This Arabidopsis thaliana (Mouse-ear cress) protein is Transcription initiation factor TFIID subunit 15b (TAF15B).